The following is a 336-amino-acid chain: MNSQNELHPNWLALTTLPLQLKRFVRAGDPDFIAESPKAVKHQIDGLNGAEAREFYKEVLDAPTTCQPNLPSTHKTAQTRREPERILVPFDKSKFFRLATSNKVEELSQMKASEEDLNSRDSFGWTALMMAACEGATEAVSWLVQRGVQVETSDKSGNTALKLAQRKGHLDVVHLLESLPILEETSEEDESVDGNNPFYCEICKRDYKETPWPIHQTSTVHQFNLKALPAHKLHKFNISAKNRGLQLMVKQGWDQEHGLGPSQSGRLYPVKTVLRKQRTGLGIEQQSARVSHFGAFDLNAVRRRDPIYQPRRTRSDMQREKVREWKRERYLRRVLS.

2 ANK repeats span residues 123 to 152 (FGWT…QVET) and 156 to 185 (SGNT…LEET). One can recognise a G-patch domain in the interval 240–286 (AKNRGLQLMVKQGWDQEHGLGPSQSGRLYPVKTVLRKQRTGLGIEQQ).

The sequence is that of G patch domain and ankyrin repeat-containing protein 1 homolog from Drosophila melanogaster (Fruit fly).